Reading from the N-terminus, the 811-residue chain is Ribonucleoside-diphosphate reductase large chain (811 aa).

Positions 1-92 constitute an ATP-cone domain; that stretch reads MFVYKRDGRQ…VSNLHKQTEK (92 aa). ATP-binding positions include 5–6, 11–17, Thr53, and Asp57; these read KR and EKVAFDK. GDP-binding residues include Ser202 and Ser217. A disulfide bridge connects residues Cys218 and Cys444. DTTP is bound by residues 226-228, Lys243, Arg256, and 263-264; these read DSI and AG. Asn427 is a GDP binding site. The active-site Proton acceptor is the Asn427. Residue Cys429 is the Cysteine radical intermediate of the active site. Residues Glu431 and 603–606 each bind GDP; that span reads TAST. Glu431 serves as the catalytic Proton acceptor.

Belongs to the ribonucleoside diphosphate reductase large chain family. As to quaternary structure, heterodimer of a large and a small subunit. Interacts with SPD1.

The enzyme catalyses a 2'-deoxyribonucleoside 5'-diphosphate + [thioredoxin]-disulfide + H2O = a ribonucleoside 5'-diphosphate + [thioredoxin]-dithiol. Its activity is regulated as follows. Under complex allosteric control mediated by deoxynucleoside triphosphates and ATP binding to separate specificity and activation sites on the large subunit. The type of nucleotide bound at the specificity site determines substrate preference. It seems probable that ATP makes the enzyme reduce CDP and UDP, dGTP favors ADP reduction and dTTP favors GDP reduction. Stimulated by ATP and inhibited by dATP binding to the activity site. Functionally, provides the precursors necessary for DNA synthesis. Catalyzes the biosynthesis of deoxyribonucleotides from the corresponding ribonucleotides. This chain is Ribonucleoside-diphosphate reductase large chain (cdc22), found in Schizosaccharomyces pombe (strain 972 / ATCC 24843) (Fission yeast).